The chain runs to 89 residues: Small ribosomal subunit protein uS15 (89 aa).

Basic and acidic residues predominate over residues 1–21 (MSITPERKQEMIKDYATKEGD). Residues 1-23 (MSITPERKQEMIKDYATKEGDTG) form a disordered region.

Belongs to the universal ribosomal protein uS15 family. In terms of assembly, part of the 30S ribosomal subunit. Forms a bridge to the 50S subunit in the 70S ribosome, contacting the 23S rRNA.

In terms of biological role, one of the primary rRNA binding proteins, it binds directly to 16S rRNA where it helps nucleate assembly of the platform of the 30S subunit by binding and bridging several RNA helices of the 16S rRNA. Its function is as follows. Forms an intersubunit bridge (bridge B4) with the 23S rRNA of the 50S subunit in the ribosome. In Rhodospirillum rubrum (strain ATCC 11170 / ATH 1.1.1 / DSM 467 / LMG 4362 / NCIMB 8255 / S1), this protein is Small ribosomal subunit protein uS15.